A 412-amino-acid polypeptide reads, in one-letter code: Argininosuccinate synthase (412 aa).

ATP-binding positions include 15 to 23 and Ala-42; that span reads AYSGGLDTS. L-citrulline is bound by residues Tyr-93 and Ser-98. Gly-123 provides a ligand contact to ATP. L-aspartate-binding residues include Thr-125, Asn-129, and Asp-130. Asn-129 provides a ligand contact to L-citrulline. Positions 133, 185, 194, 270, and 282 each coordinate L-citrulline.

This sequence belongs to the argininosuccinate synthase family. Type 1 subfamily. In terms of assembly, homotetramer.

The protein resides in the cytoplasm. It catalyses the reaction L-citrulline + L-aspartate + ATP = 2-(N(omega)-L-arginino)succinate + AMP + diphosphate + H(+). It participates in amino-acid biosynthesis; L-arginine biosynthesis; L-arginine from L-ornithine and carbamoyl phosphate: step 2/3. The sequence is that of Argininosuccinate synthase from Psychrobacter arcticus (strain DSM 17307 / VKM B-2377 / 273-4).